The sequence spans 118 residues: NADH dehydrogenase [ubiquinone] iron-sulfur protein 5-A (118 aa).

Positions 46–87 constitute a CHCH domain; that stretch reads KGRCYDFWMDFSECMSHCREPKDCTLLREDYLECLHHSKEFQ. 2 consecutive short sequence motifs (cx9C motif) follow at residues 49–59 and 69–79; these read CYDFWMDFSEC and CTLLREDYLEC. Intrachain disulfides connect cysteine 49-cysteine 79 and cysteine 59-cysteine 69. The interval 98–118 is disordered; that stretch reads RKLRAASRKGEEAGDGTHNHH.

The protein belongs to the complex I NDUFS5 subunit family. Complex I is composed of at least 49 different subunits. This is a component of the iron-sulfur (IP) fragment of the enzyme.

Its subcellular location is the mitochondrion. It is found in the mitochondrion inner membrane. The protein localises to the mitochondrion intermembrane space. Its function is as follows. Accessory subunit of the mitochondrial membrane respiratory chain NADH dehydrogenase (Complex I), that is believed not to be involved in catalysis. Complex I functions in the transfer of electrons from NADH to the respiratory chain. The immediate electron acceptor for the enzyme is believed to be ubiquinone. The polypeptide is NADH dehydrogenase [ubiquinone] iron-sulfur protein 5-A (Arabidopsis thaliana (Mouse-ear cress)).